The chain runs to 204 residues: Thymidine kinase (204 aa).

Residues 18 to 25 and 91 to 94 contribute to the ATP site; these read GSMFSGKT and DEGQ. Glu92 acts as the Proton acceptor in catalysis. 4 residues coordinate Zn(2+): Cys148, Cys151, Cys180, and His183.

This sequence belongs to the thymidine kinase family. Homotetramer.

It is found in the cytoplasm. The catalysed reaction is thymidine + ATP = dTMP + ADP + H(+). The chain is Thymidine kinase from Bdellovibrio bacteriovorus (strain ATCC 15356 / DSM 50701 / NCIMB 9529 / HD100).